The following is a 451-amino-acid chain: UDP-N-acetylmuramoylalanine--D-glutamate ligase (451 aa).

Residue 119-125 (GSNGKTT) coordinates ATP.

Belongs to the MurCDEF family.

Its subcellular location is the cytoplasm. It catalyses the reaction UDP-N-acetyl-alpha-D-muramoyl-L-alanine + D-glutamate + ATP = UDP-N-acetyl-alpha-D-muramoyl-L-alanyl-D-glutamate + ADP + phosphate + H(+). Its pathway is cell wall biogenesis; peptidoglycan biosynthesis. Cell wall formation. Catalyzes the addition of glutamate to the nucleotide precursor UDP-N-acetylmuramoyl-L-alanine (UMA). The protein is UDP-N-acetylmuramoylalanine--D-glutamate ligase of Geobacillus sp. (strain WCH70).